We begin with the raw amino-acid sequence, 477 residues long: UDP-N-acetylmuramoylalanine--D-glutamate ligase (477 aa).

125 to 131 is a binding site for ATP; that stretch reads GTNGKST.

It belongs to the MurCDEF family.

It localises to the cytoplasm. It catalyses the reaction UDP-N-acetyl-alpha-D-muramoyl-L-alanine + D-glutamate + ATP = UDP-N-acetyl-alpha-D-muramoyl-L-alanyl-D-glutamate + ADP + phosphate + H(+). Its pathway is cell wall biogenesis; peptidoglycan biosynthesis. Functionally, cell wall formation. Catalyzes the addition of glutamate to the nucleotide precursor UDP-N-acetylmuramoyl-L-alanine (UMA). The polypeptide is UDP-N-acetylmuramoylalanine--D-glutamate ligase (Rhodospirillum rubrum (strain ATCC 11170 / ATH 1.1.1 / DSM 467 / LMG 4362 / NCIMB 8255 / S1)).